Here is a 241-residue protein sequence, read N- to C-terminus: Uridylate kinase (241 aa).

Residue 15 to 18 (KLSG) participates in ATP binding. The interval 23–28 (GSEGFG) is involved in allosteric activation by GTP. G57 is a UMP binding site. ATP contacts are provided by G58 and R62. UMP contacts are provided by residues D77 and 138–145 (TGNPFCTT). 3 residues coordinate ATP: T165, Y171, and D174.

This sequence belongs to the UMP kinase family. As to quaternary structure, homohexamer.

It localises to the cytoplasm. It carries out the reaction UMP + ATP = UDP + ADP. It functions in the pathway pyrimidine metabolism; CTP biosynthesis via de novo pathway; UDP from UMP (UMPK route): step 1/1. Allosterically activated by GTP. Inhibited by UTP. In terms of biological role, catalyzes the reversible phosphorylation of UMP to UDP. The polypeptide is Uridylate kinase (Shewanella amazonensis (strain ATCC BAA-1098 / SB2B)).